Here is a 103-residue protein sequence, read N- to C-terminus: MVRYRMRSLSERPHEVHGQQVHGQDQGHNGQEEQGLNPEHVEVYERTHRGHSHHRRRRCSRRRLHRIHRRRHRSCRRRRRRSCRHRRRHRRGCRTRRRRCRRH.

The interval 1–103 (MVRYRMRSLS…RTRRRRCRRH (103 aa)) is disordered. A phosphoserine mark is found at Ser8 and Ser10. Positions 8 to 17 (SLSERPHEVH) are enriched in basic and acidic residues. Residues 18–29 (GQQVHGQDQGHN) are compositionally biased toward low complexity. Residues 48 to 103 (HRGHSHHRRRRCSRRRLHRIHRRRHRSCRRRRRRSCRHRRRHRRGCRTRRRRCRRH) are compositionally biased toward basic residues.

Belongs to the protamine P2 family. As to quaternary structure, interacts with TDRP. Proteolytic processing into mature chains is required for histone eviction during spermatogenesis. Transition proteins (TNP1 and TNP2) are required for processing. Testis.

The protein localises to the nucleus. It localises to the chromosome. Functionally, protamines substitute for histones in the chromatin of sperm during the haploid phase of spermatogenesis. They compact sperm DNA into a highly condensed, stable and inactive complex. The protein is Protamine-2 (PRM2) of Macaca nemestrina (Pig-tailed macaque).